The following is a 461-amino-acid chain: Cysteine--tRNA ligase (461 aa).

Cys-28 contributes to the Zn(2+) binding site. The short motif at 30–40 is the 'HIGH' region element; sequence ITVYDLCHIGH. Zn(2+) is bound by residues Cys-209, His-234, and Glu-238. The 'KMSKS' region motif lies at 266–270; it reads KMSKS. Lys-269 serves as a coordination point for ATP.

The protein belongs to the class-I aminoacyl-tRNA synthetase family. As to quaternary structure, monomer. Zn(2+) serves as cofactor.

The protein resides in the cytoplasm. It carries out the reaction tRNA(Cys) + L-cysteine + ATP = L-cysteinyl-tRNA(Cys) + AMP + diphosphate. This Escherichia coli (strain 55989 / EAEC) protein is Cysteine--tRNA ligase.